The sequence spans 437 residues: 3-phosphoshikimate 1-carboxyvinyltransferase (437 aa).

The 3-phosphoshikimate site is built by Lys22, Ser23, and Arg27. Lys22 is a binding site for phosphoenolpyruvate. Residues Gly96 and Arg125 each coordinate phosphoenolpyruvate. Residues Ser170, Gln172, Asp323, and Lys350 each contribute to the 3-phosphoshikimate site. Gln172 is a phosphoenolpyruvate binding site. Asp323 serves as the catalytic Proton acceptor. Phosphoenolpyruvate is bound by residues Arg354 and Arg396.

The protein belongs to the EPSP synthase family. Monomer.

Its subcellular location is the cytoplasm. It catalyses the reaction 3-phosphoshikimate + phosphoenolpyruvate = 5-O-(1-carboxyvinyl)-3-phosphoshikimate + phosphate. It participates in metabolic intermediate biosynthesis; chorismate biosynthesis; chorismate from D-erythrose 4-phosphate and phosphoenolpyruvate: step 6/7. Its function is as follows. Catalyzes the transfer of the enolpyruvyl moiety of phosphoenolpyruvate (PEP) to the 5-hydroxyl of shikimate-3-phosphate (S3P) to produce enolpyruvyl shikimate-3-phosphate and inorganic phosphate. This chain is 3-phosphoshikimate 1-carboxyvinyltransferase, found in Synechococcus sp. (strain RCC307).